The sequence spans 132 residues: T-cell receptor alpha chain V region CTL-F3 (132 aa).

The N-terminal stretch at Met-1–Gly-22 is a signal peptide. Residues Asp-23–Ser-114 are v segment. N-linked (GlcNAc...) asparagine glycosylation occurs at Asn-43. A disulfide bond links Cys-44 and Cys-111. The j segment stretch occupies residues Asn-115–Pro-132.

The polypeptide is T-cell receptor alpha chain V region CTL-F3 (Mus musculus (Mouse)).